A 721-amino-acid chain; its full sequence is Photosystem I P700 chlorophyll a apoprotein A1 (721 aa).

Helical transmembrane passes span 61–84 (VFSA…FHGA), 147–170 (LYCT…FHYH), 186–210 (LNHH…HVSL), 282–300 (TAHH…GHMY), 337–360 (WHAQ…HHMY), 376–402 (LSLF…IFMV), 424–446 (AIVS…LYIH), and 522–540 (FLVH…LILL). Residues cysteine 564 and cysteine 573 each coordinate [4Fe-4S] cluster. Transmembrane regions (helical) follow at residues 580-601 (HVFL…HFSW) and 655-677 (LSAY…MFLF). Histidine 666 is a binding site for chlorophyll a'. Methionine 674 and tyrosine 682 together coordinate chlorophyll a. Position 683 (tryptophan 683) interacts with phylloquinone. Residues 715 to 721 (AVGVAHY) traverse the membrane as a helical segment.

This sequence belongs to the PsaA/PsaB family. In terms of assembly, the PsaA/B heterodimer binds the P700 chlorophyll special pair and subsequent electron acceptors. PSI consists of a core antenna complex that captures photons, and an electron transfer chain that converts photonic excitation into a charge separation. The eukaryotic PSI reaction center is composed of at least 11 subunits. P700 is a chlorophyll a/chlorophyll a' dimer, A0 is one or more chlorophyll a, A1 is one or both phylloquinones and FX is a shared 4Fe-4S iron-sulfur center. is required as a cofactor.

The protein resides in the plastid. It is found in the chloroplast thylakoid membrane. The enzyme catalyses reduced [plastocyanin] + hnu + oxidized [2Fe-2S]-[ferredoxin] = oxidized [plastocyanin] + reduced [2Fe-2S]-[ferredoxin]. In terms of biological role, psaA and PsaB bind P700, the primary electron donor of photosystem I (PSI), as well as the electron acceptors A0, A1 and FX. PSI is a plastocyanin-ferredoxin oxidoreductase, converting photonic excitation into a charge separation, which transfers an electron from the donor P700 chlorophyll pair to the spectroscopically characterized acceptors A0, A1, FX, FA and FB in turn. Oxidized P700 is reduced on the lumenal side of the thylakoid membrane by plastocyanin. This chain is Photosystem I P700 chlorophyll a apoprotein A1, found in Ginkgo biloba (Ginkgo).